The primary structure comprises 98 residues: Nuclear protein 2 (98 aa).

Positions 1–11 are enriched in low complexity; the sequence is MEPAAPTVQPR. Disordered stretches follow at residues 1–24 and 78–98; these read MEPA…PPVG and LNSQ…TRLT. Basic residues predominate over residues 81–98; that stretch reads QRKRRQRQLQPRPRTRLT.

The protein belongs to the NUPR family.

The protein localises to the nucleus. Its function is as follows. Acts as a transcriptional repressor by inhibiting gene expression at the NUPR1 promoter in a p53/TP53-dependent manner in cancer cells. Involved in the G1 cell cycle arrest, and in a decrease in cell viability and cell proliferation. Plays a role as a negative regulator of the protumoral factor NUPR1. This is Nuclear protein 2 from Bos taurus (Bovine).